The following is a 3856-amino-acid chain: Serine/threonine-protein kinase ATM (3856 aa).

A PWWP domain is found at 108-162 (VGNLVWVMTKYKKWWPGEVVDFKADAKESFMVRSIGQSHLVSWFASSKLKPFKES). Residues 648-681 (GIPDLNGTNTEPTLVLPQVEPTQRRRRRKKEESP) are disordered. An FAT domain is found at 2727 to 3393 (VVAGSAVVCG…ILQLLALANG (667 aa)). A Bipartite nuclear localization signal motif is present at residues 3233–3249 (RKHKTKELEVFIKRFKS). The region spanning 3499 to 3811 (LSDSVTVMNG…GNKDATRALM (313 aa)) is the PI3K/PI4K catalytic domain. Residues 3505–3511 (VMNGINA) form a G-loop region. Residues 3678–3686 (GLGDRHAMN) form a catalytic loop region. The activation loop stretch occupies residues 3698–3722 (HIDLGVAFEQGLMLKTPERVPFRLT). Residues 3824–3856 (EMRSIHGQAQQLIQDAIDTDRLSHMFPGWGAWM) enclose the FATC domain.

The protein belongs to the PI3/PI4-kinase family. In terms of assembly, interacts with RUG3. As to expression, ubiquitously expressed at low levels with slightly higher levels in flower buds.

It localises to the nucleus. It carries out the reaction L-seryl-[protein] + ATP = O-phospho-L-seryl-[protein] + ADP + H(+). The enzyme catalyses L-threonyl-[protein] + ATP = O-phospho-L-threonyl-[protein] + ADP + H(+). Its function is as follows. Serine/threonine protein kinase which activates checkpoint signaling upon genotoxic stresses such as ionizing radiation (IR) or DNA replication stalling. Plays a central role in the perception and response to both stress-induced damage in somatic cells and developmentally programmed DNA damage during meiosis. Recognizes the substrate consensus sequence [ST]-Q. Phosphorylates histone variant H2AX to form H2AXS139ph at double strand breaks (DSBs), thereby regulating DNA damage response mechanism. Involved in transcriptional regulation of RAD51, PARP1, GR1, and LIG4 in response to DNA double strand breaks. Plays a dual role by activating the DNA damage response at dysfunctional telomeres and yet preventing this activation at functional telomeres. Not required for telomere length homeostasis. Regulates DNA damage response (DDR) synergistically with RUG3. Together with RUG3, involved in the splicing of the ND2/NAD2 mRNA. In Arabidopsis thaliana (Mouse-ear cress), this protein is Serine/threonine-protein kinase ATM.